We begin with the raw amino-acid sequence, 479 residues long: Aldehyde dehydrogenase family 3 member B2 (479 aa).

Catalysis depends on residues Glu223 and Cys257. Cys476 carries the post-translational modification Cysteine methyl ester. Cys476 carries the S-geranylgeranyl cysteine lipid modification. Positions 477–479 (TLL) are cleaved as a propeptide — removed in mature form.

Belongs to the aldehyde dehydrogenase family. Post-translationally, geranylgeranylation is important for localization to lipid droplets and enzyme activity. In terms of tissue distribution, expressed in testis, white adipose tissue, lung, small intestine, kidney, spleen and liver.

The protein localises to the lipid droplet. It catalyses the reaction an aldehyde + NAD(+) + H2O = a carboxylate + NADH + 2 H(+). The catalysed reaction is a long-chain fatty aldehyde + NAD(+) + H2O = a long-chain fatty acid + NADH + 2 H(+). The enzyme catalyses a medium-chain fatty aldehyde + NAD(+) + H2O = a medium-chain fatty acid + NADH + 2 H(+). It carries out the reaction hexadecanoate + NADH + 2 H(+) = hexadecanal + NAD(+) + H2O. It catalyses the reaction octanal + NAD(+) + H2O = octanoate + NADH + 2 H(+). The protein operates within alcohol metabolism; ethanol degradation; acetate from ethanol: step 2/2. Oxidizes medium and long chain fatty aldehydes in lipid droplets into non-toxic fatty acids. This is Aldehyde dehydrogenase family 3 member B2 from Mus musculus (Mouse).